The chain runs to 142 residues: Large ribosomal subunit protein uL11 (142 aa).

The protein belongs to the universal ribosomal protein uL11 family. Part of the ribosomal stalk of the 50S ribosomal subunit. Interacts with L10 and the large rRNA to form the base of the stalk. L10 forms an elongated spine to which L12 dimers bind in a sequential fashion forming a multimeric L10(L12)X complex. In terms of processing, one or more lysine residues are methylated.

Forms part of the ribosomal stalk which helps the ribosome interact with GTP-bound translation factors. The polypeptide is Large ribosomal subunit protein uL11 (Bartonella bacilliformis (strain ATCC 35685 / KC583 / Herrer 020/F12,63)).